Here is a 245-residue protein sequence, read N- to C-terminus: 1-(5-phosphoribosyl)-5-[(5-phosphoribosylamino)methylideneamino] imidazole-4-carboxamide isomerase (245 aa).

D7 functions as the Proton acceptor in the catalytic mechanism. The active-site Proton donor is the D129.

This sequence belongs to the HisA/HisF family.

It is found in the cytoplasm. It carries out the reaction 1-(5-phospho-beta-D-ribosyl)-5-[(5-phospho-beta-D-ribosylamino)methylideneamino]imidazole-4-carboxamide = 5-[(5-phospho-1-deoxy-D-ribulos-1-ylimino)methylamino]-1-(5-phospho-beta-D-ribosyl)imidazole-4-carboxamide. It functions in the pathway amino-acid biosynthesis; L-histidine biosynthesis; L-histidine from 5-phospho-alpha-D-ribose 1-diphosphate: step 4/9. The sequence is that of 1-(5-phosphoribosyl)-5-[(5-phosphoribosylamino)methylideneamino] imidazole-4-carboxamide isomerase from Citrobacter koseri (strain ATCC BAA-895 / CDC 4225-83 / SGSC4696).